A 166-amino-acid chain; its full sequence is Protein-export protein SecB (166 aa).

Belongs to the SecB family. Homotetramer, a dimer of dimers. One homotetramer interacts with 1 SecA dimer.

It localises to the cytoplasm. One of the proteins required for the normal export of preproteins out of the cell cytoplasm. It is a molecular chaperone that binds to a subset of precursor proteins, maintaining them in a translocation-competent state. It also specifically binds to its receptor SecA. In Cereibacter sphaeroides (strain ATCC 17029 / ATH 2.4.9) (Rhodobacter sphaeroides), this protein is Protein-export protein SecB.